The following is a 343-amino-acid chain: Methionine import ATP-binding protein MetN (343 aa).

In terms of domain architecture, ABC transporter spans 2-241; sequence IKLSNITKVF…PKTPLAQKFI (240 aa). Residue 38 to 45 participates in ATP binding; that stretch reads GASGAGKS.

Belongs to the ABC transporter superfamily. Methionine importer (TC 3.A.1.24) family. The complex is composed of two ATP-binding proteins (MetN), two transmembrane proteins (MetI) and a solute-binding protein (MetQ).

The protein resides in the cell inner membrane. The catalysed reaction is L-methionine(out) + ATP + H2O = L-methionine(in) + ADP + phosphate + H(+). It catalyses the reaction D-methionine(out) + ATP + H2O = D-methionine(in) + ADP + phosphate + H(+). Its function is as follows. Part of the ABC transporter complex MetNIQ involved in methionine import. Responsible for energy coupling to the transport system. This is Methionine import ATP-binding protein MetN from Escherichia coli O157:H7.